A 209-amino-acid polypeptide reads, in one-letter code: COP9 signalosome complex subunit 8 (209 aa).

The 172-residue stretch at 8-179 folds into the PCI domain; the sequence is ESAFSFKKLL…GALDVSFNKF (172 aa). Residue Ser175 is modified to Phosphoserine.

The protein belongs to the CSN8 family. In terms of assembly, component of the CSN complex, composed of COPS1/GPS1, COPS2, COPS3, COPS4, COPS5, COPS6, COPS7 (COPS7A or COPS7B), COPS8 and COPS9 isoform 1. In the complex, it probably interacts directly with COPS3, COPS4 and COPS7 (COPS7A or COPS7B).

Its subcellular location is the cytoplasm. It localises to the nucleus. Functionally, component of the COP9 signalosome complex (CSN), a complex involved in various cellular and developmental processes. The CSN complex is an essential regulator of the ubiquitin (Ubl) conjugation pathway by mediating the deneddylation of the cullin subunits of SCF-type E3 ligase complexes, leading to decrease the Ubl ligase activity of SCF-type complexes such as SCF, CSA or DDB2. The complex is also involved in phosphorylation of p53/TP53, c-jun/JUN, IkappaBalpha/NFKBIA, ITPK1 and IRF8/ICSBP, possibly via its association with CK2 and PKD kinases. CSN-dependent phosphorylation of TP53 and JUN promotes and protects degradation by the Ubl system, respectively. The protein is COP9 signalosome complex subunit 8 (COPS8) of Homo sapiens (Human).